The following is a 142-amino-acid chain: Large ribosomal subunit protein uL11 (142 aa).

Belongs to the universal ribosomal protein uL11 family. Part of the ribosomal stalk of the 50S ribosomal subunit. Interacts with L10 and the large rRNA to form the base of the stalk. L10 forms an elongated spine to which L12 dimers bind in a sequential fashion forming a multimeric L10(L12)X complex. One or more lysine residues are methylated.

In terms of biological role, forms part of the ribosomal stalk which helps the ribosome interact with GTP-bound translation factors. The polypeptide is Large ribosomal subunit protein uL11 (Haemophilus influenzae (strain 86-028NP)).